The sequence spans 298 residues: Arginase (298 aa).

The Mn(2+) site is built by H98, D121, H123, and D125. Substrate is bound by residues 123–127 (HGDLN), 134–136 (SGN), and D177. Mn(2+)-binding residues include D225 and D227. Residues T239 and E270 each coordinate substrate.

The protein belongs to the arginase family. Mn(2+) serves as cofactor.

The catalysed reaction is L-arginine + H2O = urea + L-ornithine. It functions in the pathway nitrogen metabolism; urea cycle; L-ornithine and urea from L-arginine: step 1/1. This Brevibacillus brevis (Bacillus brevis) protein is Arginase (rocF).